Reading from the N-terminus, the 992-residue chain is Presequence protease, mitochondrial (992 aa).

Residues 1–30 constitute a mitochondrion transit peptide; it reads MNYAKLSIAFSKKTIKTHNCRLFQRWLHVG. H91 contributes to the Zn(2+) binding site. E94 (proton acceptor) is an active-site residue. H95 contacts Zn(2+). E167 is an active-site residue. Residue E192 participates in Zn(2+) binding.

This sequence belongs to the peptidase M16 family. PreP subfamily. Monomer and homodimer; homodimerization is induced by binding of the substrate. The cofactor is Zn(2+).

Its subcellular location is the mitochondrion intermembrane space. It localises to the mitochondrion matrix. Degrades mitochondrial transit peptides after their cleavage in the intermembrane space or in the matrix, and presequence peptides; clearance of these peptides is required to keep the presequence processing machinery running. Preferentially cleaves the N-terminal side of paired basic amino acid residues. Also degrades other unstructured peptides. May function as an ATP-dependent peptidase as opposed to a metalloendopeptidase. In Schizosaccharomyces pombe (strain 972 / ATCC 24843) (Fission yeast), this protein is Presequence protease, mitochondrial (cym1).